Consider the following 490-residue polypeptide: Acetyl-coenzyme A carboxylase carboxyl transferase subunit beta, chloroplastic (490 aa).

A CoA carboxyltransferase N-terminal domain is found at Leu228–Asn490. Positions 232, 235, 251, and 254 each coordinate Zn(2+). The segment at Cys232 to Cys254 adopts a C4-type zinc-finger fold.

It belongs to the AccD/PCCB family. Acetyl-CoA carboxylase is a heterohexamer composed of biotin carboxyl carrier protein, biotin carboxylase and 2 subunits each of ACCase subunit alpha and ACCase plastid-coded subunit beta (accD). Requires Zn(2+) as cofactor.

The protein resides in the plastid. It localises to the chloroplast stroma. The enzyme catalyses N(6)-carboxybiotinyl-L-lysyl-[protein] + acetyl-CoA = N(6)-biotinyl-L-lysyl-[protein] + malonyl-CoA. The protein operates within lipid metabolism; malonyl-CoA biosynthesis; malonyl-CoA from acetyl-CoA: step 1/1. Functionally, component of the acetyl coenzyme A carboxylase (ACC) complex. Biotin carboxylase (BC) catalyzes the carboxylation of biotin on its carrier protein (BCCP) and then the CO(2) group is transferred by the transcarboxylase to acetyl-CoA to form malonyl-CoA. In Eucalyptus globulus subsp. globulus (Tasmanian blue gum), this protein is Acetyl-coenzyme A carboxylase carboxyl transferase subunit beta, chloroplastic.